A 175-amino-acid polypeptide reads, in one-letter code: Ribosome maturation factor RimM (175 aa).

The 73-residue stretch at 97–169 (EDKFYFHEII…TVRVITPEGL (73 aa)) folds into the PRC barrel domain.

The protein belongs to the RimM family. Binds ribosomal protein uS19.

Its subcellular location is the cytoplasm. An accessory protein needed during the final step in the assembly of 30S ribosomal subunit, possibly for assembly of the head region. Essential for efficient processing of 16S rRNA. May be needed both before and after RbfA during the maturation of 16S rRNA. It has affinity for free ribosomal 30S subunits but not for 70S ribosomes. The chain is Ribosome maturation factor RimM from Christiangramia forsetii (strain DSM 17595 / CGMCC 1.15422 / KT0803) (Gramella forsetii).